We begin with the raw amino-acid sequence, 1707 residues long: MSTSSSNIPYDVGSPRQQSQTEIRSILNPSTTSTGAHPSFNQYHPPTAAPPLIPSHIPLQSTTPSTLGLSLGTPLYQSERDIGYPRDQKPTSNYYDPTSDSSERRPATAESKWSDREAKTSQRRDSYPYQQNQPPAPSTDGPMNLYNGGYKSPVNSHFPPGSPISHAHPQGRVPPLVTQSPRMPAMESPISRHNGLGGGPELQDKPVIKQEPVPASTPSRPVDPMAFSSILSSAAPEPTPKPQPTPTPIVSKPRKASRQPIPTLKPEPSSAPSSRQSSVAPAPQPPTSRVPAKRKANGETKPTPKPKPFTKDQERDIVILMSKLDGEPEDSDVEFAEEKRLYQTRSLKRKLEVEKIETSKTKQRRTDFTNKMAKRLEKHAKAGEERYREVEGDAAISKVQADEIQTEKERKKDMQRKRRREKTVQNNMEQKEIALAKAQAAQDDQERHKFLRDAQRAEKKAQQTKQILARGDKGPEIRAVSPMEPNMQGGSMSTFTAVDPDSTKKPKRGGARPRKSKEQKQAEKDSAAAAQEAIDKGESPALMPIRDAAEFKDMKPLPSKEGVTKIKLKFKAPAEPVEVKEESPSAPVDQHNTKMYHVVYDQIWKDLARKEVPKVFKLAVDSYSIRASNLKKTAILASKEAKRWQLRTNKGTKDLQARAKRVMREMMSFWKRNEREERDTRRAAEKQEIENAKKAEADREANRQKRKLNFLISQTELYSHFIGKKIKTDEVERSTDHPDVAVPDKADHAKPDHGDLPEGTAPAKVTNFEDLDFDAEDESVLKAAAMANAQNAIQEAQNKARAFNKKDDAPAMDDEGEMNFQNPAGMGDVDIEQPKMLQAQLKEYQLKGLNWLVNLYEQGINGILADEMGLGKTVQSISVMAYLAEKHGIWGPFLVVAPASTLHNWQQEITKFVPRLKVLPYWGTAADRKVLRKFWDRKHITYTEDAPFHVLVTSYQLVVSDVAYFQKMKWQYMILDEAQAIKSSQSSRWKSLLGFHCRNRLLLTGTPIQNNMQELWALLHFIMPSLFDSHDEFSEWFSKDIESHAQSNTKLNEDQLKRLHMILKPFMLRRVKKHVQKELGDKIEEDIFCDLTYRQRAYYSNLRNQISIMDLIEKATIGDDNDTGTLMNLVMQFRKVCNHPDLFERAETTSPLSFSYFAEAGSFLREGSNVTVAYSARNMIEYSLPRLIWREGGRLDLPGHDNEHAGVKAKCLESLFNVWKPENIVDSAKEDGAFSWLRFTNTSVQELSTASRKDVFARAVDLVKRPQTLGRLNIVYDEEEDKNYTPVHSMLQIVNRKDRKPLAEVTNEGYLNKLFNVAKDVWGQSGMSRMEQCGRPSATAPPIEVTCSSRGAVIERQKILFNVPMRRALFGPSPVEEKALITSKVSPLFYPPKPMLPLPTSEKQRFTNIKVPSMRRFVTDSGKLAKLDSLLTKLKEGGHRVLLYFQMTRMIDLMEEYLTYRNYKYLRLDGSTKLEDRRDTVHDFQTRPEIFIFLLSTRAGGLGINLTSADTVIFYDSDWNPTIDSQAMDRAHRLGQTRQVTVYRMITRGTIEERIRKRALQKEEVQKVVMTGGAGGGVDFNTRSKENRTKDIAMWLVDDEEAAEIERKEAEQLRYEAENPTASKKGKGKGKKGKEGGGGSLEDLYHEGEGHFDDGSNRPSGTATPIAVDASKKKGSSSRKSGGGGRSKKAKTAKERLAMADGDVDMA.

Disordered stretches follow at residues 1–315, 398–429, 454–543, 673–702, and 729–761; these read MSTS…DQER, KVQADEIQTEKERKKDMQRKRRREKTVQNNME, AQRA…PALM, NEREERDTRRAAEKQEIENAKKAEADREAN, and DEVERSTDHPDVAVPDKADHAKPDHGDLPEGTA. Positions 15-44 are enriched in polar residues; the sequence is PRQQSQTEIRSILNPSTTSTGAHPSFNQYH. Low complexity predominate over residues 61–75; sequence STTPSTLGLSLGTPL. Basic and acidic residues predominate over residues 78-89; that stretch reads SERDIGYPRDQK. Over residues 90–100 the composition is skewed to polar residues; that stretch reads PTSNYYDPTSD. Positions 101-126 are enriched in basic and acidic residues; it reads SSERRPATAESKWSDREAKTSQRRDS. Thr178 bears the Phosphothreonine mark. The segment covering 237 to 247 has biased composition (pro residues); that stretch reads EPTPKPQPTPT. The segment covering 266-281 has biased composition (low complexity); sequence PEPSSAPSSRQSSVAP. Residues 369 to 470 adopt a coiled-coil conformation; sequence TNKMAKRLEK…AQQTKQILAR (102 aa). The segment covering 505-515 has biased composition (basic residues); that stretch reads KPKRGGARPRK. A compositionally biased stretch (basic and acidic residues) spans 516–526; it reads SKEQKQAEKDS. The DBINO domain occupies 603–728; that stretch reads IWKDLARKEV…SHFIGKKIKT (126 aa). The span at 729-756 shows a compositional bias: basic and acidic residues; it reads DEVERSTDHPDVAVPDKADHAKPDHGDL. The Helicase ATP-binding domain occupies 853–1025; sequence VNLYEQGING…WALLHFIMPS (173 aa). Residue 866–873 participates in ATP binding; the sequence is DEMGLGKT. The DEAQ box signature appears at 976–979; it reads DEAQ. One can recognise a Helicase C-terminal domain in the interval 1426-1586; sequence KLDSLLTKLK…GVDFNTRSKE (161 aa). The interval 1610 to 1707 is disordered; sequence AEQLRYEAEN…AMADGDVDMA (98 aa). Positions 1643–1656 are enriched in basic and acidic residues; that stretch reads DLYHEGEGHFDDGS.

Belongs to the SNF2/RAD54 helicase family. As to quaternary structure, component of the INO80 chromatin-remodeling complex.

The protein localises to the nucleus. The catalysed reaction is ATP + H2O = ADP + phosphate + H(+). Functionally, ATPase component of the INO80 complex which remodels chromatin by shifting nucleosomes and is involved in DNA repair. This is Chromatin-remodeling ATPase INO80 (INO80) from Sclerotinia sclerotiorum (strain ATCC 18683 / 1980 / Ss-1) (White mold).